Here is a 251-residue protein sequence, read N- to C-terminus: tRNA pseudouridine synthase A 1 (251 aa).

The active-site Nucleophile is the aspartate 52. Substrate is bound at residue tyrosine 110.

The protein belongs to the tRNA pseudouridine synthase TruA family. In terms of assembly, homodimer.

The catalysed reaction is uridine(38/39/40) in tRNA = pseudouridine(38/39/40) in tRNA. Its function is as follows. Formation of pseudouridine at positions 38, 39 and 40 in the anticodon stem and loop of transfer RNAs. This is tRNA pseudouridine synthase A 1 from Desulfotalea psychrophila (strain LSv54 / DSM 12343).